Here is a 388-residue protein sequence, read N- to C-terminus: MKKIAIFGSTGSIGSSLLKIIKDDQKNFKIELLTVNKNYKKLIKQVKLFNVKNVIVTDYNSFLITTKLLKNAKVKVFNNFDSLNKIFNTNNKIDYSMCAISGFDGLKPTLDIIKFTKTIAIANKESIICGWNLIKKDLKKYKTYFVPVDSEHFSIWSLLDNNKKNNFEKIYITASGGPFRNLSLKKFRNISVKDALKHPNWSMGKKITIDSATMMNKVFEIIEAKKIFNLNYKQLEILIHPKSYLHAIVKFNNGLSKLLVHDTNMTIPIFNSIYFNTDKKLKSKNIDIKTLNNLNLKKIDNIRFPVIKILNNLSNEDSLFETIIVSANDKLVKLFLNNKIKFNDISNTLIKICNTPEFNKFKSMKPRNIDEIQNLNDYVSLKISSMSV.

NADPH contacts are provided by threonine 10, glycine 11, serine 12, isoleucine 13, lysine 37, asparagine 38, and asparagine 123. Lysine 124 serves as a coordination point for 1-deoxy-D-xylulose 5-phosphate. Glutamate 125 provides a ligand contact to NADPH. Aspartate 149 contacts Mn(2+). Positions 150, 151, 175, and 198 each coordinate 1-deoxy-D-xylulose 5-phosphate. Glutamate 151 provides a ligand contact to Mn(2+). Residue glycine 204 coordinates NADPH. 4 residues coordinate 1-deoxy-D-xylulose 5-phosphate: serine 211, asparagine 216, lysine 217, and glutamate 220. A Mn(2+)-binding site is contributed by glutamate 220.

The protein belongs to the DXR family. Mg(2+) serves as cofactor. The cofactor is Mn(2+).

The enzyme catalyses 2-C-methyl-D-erythritol 4-phosphate + NADP(+) = 1-deoxy-D-xylulose 5-phosphate + NADPH + H(+). Its pathway is isoprenoid biosynthesis; isopentenyl diphosphate biosynthesis via DXP pathway; isopentenyl diphosphate from 1-deoxy-D-xylulose 5-phosphate: step 1/6. Functionally, catalyzes the NADPH-dependent rearrangement and reduction of 1-deoxy-D-xylulose-5-phosphate (DXP) to 2-C-methyl-D-erythritol 4-phosphate (MEP). This is 1-deoxy-D-xylulose 5-phosphate reductoisomerase from Pelagibacter ubique (strain HTCC1062).